A 329-amino-acid polypeptide reads, in one-letter code: Fructose-1,6-bisphosphatase class 1 2 (329 aa).

Residues E92, D111, L113, and D114 each contribute to the Mg(2+) site. Residues 114 to 117 (DGSS) and N206 each bind substrate. Residue E278 coordinates Mg(2+).

The protein belongs to the FBPase class 1 family. As to quaternary structure, homotetramer. Mg(2+) is required as a cofactor.

Its subcellular location is the cytoplasm. It catalyses the reaction beta-D-fructose 1,6-bisphosphate + H2O = beta-D-fructose 6-phosphate + phosphate. The protein operates within carbohydrate biosynthesis; gluconeogenesis. The sequence is that of Fructose-1,6-bisphosphatase class 1 2 from Xanthobacter autotrophicus (strain ATCC BAA-1158 / Py2).